A 783-amino-acid chain; its full sequence is MSSDWDEIKRLAADFQKAQLTSTLQKLSERNCIEIVTLLLEKQLLDVVFTNDGKEYITPEHLEREIQDELYANGGRANLVEVSKTLNVDLSRIEALAERIAADNPQIHLMLGQLIDEDYITHIAQEINEKLSQRGEISISDLTSQFDLPSEFLQHNVMEKHLGKTIKGRQDATNPRVFFTQAYIQRCKAKIRGALAAITKPTNVSVILQQINVQEKIFHSLLDEIMPAGQVTSKQANAQYVPHIYAKTQAEWVNSFYKQNSFLEYEAINKLGISDAKAYIRKQFPNEQFLFLKRVALGAHLIELTVVSALNECSATKQYLDLATILPSNLSEEDIEEAFDAVMAQKHCNPSQFVYLQSIVFSQAYLTQLIQPCHDMAHALAKAAIDSGAYQQYIVEKTLAQKGSNSSANFDADDDGKVDKRDERRKKAASGKAGGGAQGRETKTKSTKKHQRGRAAAHNHDSDDDEETTQQSAGSSRKSVKPLELVKSSDVINRIKSTLEEEGLEHLAKPIAGLFVNQLNQAALAKAQELYEATPQTNRRQTHAAIQERVNTLLVDLRLYEKGIKLFNTDTQAQLIKYLLKSLGNDICNELTLYVAAECSLSVKMTNLNVDQRIKLIQECDAQYRNALLEQNKALNKSIEDFELATEAVLKTCSMIIKKADKKKDRALIVSHKEKLMQQLSECREPALLLHLAALILFTTITGCILHASGKFVSTILQHIRPTLNESQNALLLRYHDLVLQMLQQGTTDSPESKSLNEQLQTLQAEVVDLAQNFSRVSVSKAD.

The interval 404–482 (SNSSANFDAD…AGSSRKSVKP (79 aa)) is disordered. A compositionally biased stretch (basic residues) spans 445-457 (KSTKKHQRGRAAA).

The protein belongs to the UFL1 family.

Functionally, E3 UFM1-protein ligase that mediates ufmylation of target proteins. The sequence is that of E3 UFM1-protein ligase 1 homolog from Drosophila mojavensis (Fruit fly).